The following is a 221-amino-acid chain: Lysine N-acyltransferase MbtK (221 aa).

The tract at residues 1–34 (MSDAPAESAPAQIDPAQTDPAEQPVQILPRERSD) is disordered. His-141 lines the substrate pocket. The active-site Proton acceptor is the Asp-179.

Belongs to the lysine N-acyltransferase MbtK family. As to quaternary structure, monomer.

Its pathway is siderophore biosynthesis; mycobactin biosynthesis. In terms of biological role, acyltransferase required for the direct transfer of medium- to long-chain fatty acyl moieties from a carrier protein (MbtL) on to the epsilon-amino group of lysine residue in the mycobactin core. This Mycolicibacterium paratuberculosis (strain ATCC BAA-968 / K-10) (Mycobacterium paratuberculosis) protein is Lysine N-acyltransferase MbtK (mbtK).